Consider the following 492-residue polypeptide: Pre-mRNA-processing factor 19 (492 aa).

One can recognise a U-box domain in the interval 1–72; the sequence is MSFVCGISGE…APRNVSGTSI (72 aa). 6 WD repeats span residues 207 to 246, 249 to 288, 291 to 330, 336 to 375, 378 to 417, and 461 to 491; these read HSTG…VMQT, GHNK…SKAI, VHQA…SLCK, GSQI…VAAA, GHTA…NLKT, and DHSG…RVFS.

This sequence belongs to the WD repeat PRP19 family. In terms of assembly, homotetramer. Component of the NTC complex (or PRP19-associated complex) which is associated with the spliceosome.

Its subcellular location is the nucleus. The protein resides in the nucleoplasm. The catalysed reaction is S-ubiquitinyl-[E2 ubiquitin-conjugating enzyme]-L-cysteine + [acceptor protein]-L-lysine = [E2 ubiquitin-conjugating enzyme]-L-cysteine + N(6)-ubiquitinyl-[acceptor protein]-L-lysine.. Its pathway is protein modification; protein ubiquitination. Probable ubiquitin-protein ligase which is mainly involved pre-mRNA splicing and DNA repair. Core component of the NTC/Nineteen complex which is part of the spliceosome and participates in its assembly, its remodeling and is required for its activity. Together with emb-4, necessary for interaction of rnp-4, a probable exon junction complex component, with mRNAs and spliceosomal snRNAs. Plays a role in nuclear retention of unspliced mRNAs. This is Pre-mRNA-processing factor 19 (prp-19) from Caenorhabditis elegans.